We begin with the raw amino-acid sequence, 169 residues long: Ribosome maturation factor RimM (169 aa).

Residues 97–169 enclose the PRC barrel domain; sequence EDEVYFKDLI…KIVVDWEYDY (73 aa).

The protein belongs to the RimM family. In terms of assembly, binds ribosomal protein uS19.

The protein localises to the cytoplasm. Functionally, an accessory protein needed during the final step in the assembly of 30S ribosomal subunit, possibly for assembly of the head region. Essential for efficient processing of 16S rRNA. May be needed both before and after RbfA during the maturation of 16S rRNA. It has affinity for free ribosomal 30S subunits but not for 70S ribosomes. The sequence is that of Ribosome maturation factor RimM from Francisella tularensis subsp. tularensis (strain WY96-3418).